Here is a 104-residue protein sequence, read N- to C-terminus: MSTYAIIKTGGKQVKVEVGQAIYVEKINAEAGSEVTFNEVVLVGGDKTVVGTPVVEGATVVGTIEKQGKQKKVVTFKYKPKKGSHRKQGHRQPYTKVVINAINA.

This sequence belongs to the bacterial ribosomal protein bL21 family. In terms of assembly, part of the 50S ribosomal subunit. Contacts protein L20.

In terms of biological role, this protein binds to 23S rRNA in the presence of protein L20. This chain is Large ribosomal subunit protein bL21, found in Streptococcus thermophilus (strain ATCC BAA-491 / LMD-9).